Here is a 127-residue protein sequence, read N- to C-terminus: Cyclin-dependent protein kinase inhibitor SIM (127 aa).

The segment at 21–71 (RANTNRDDDGGGCTTPTSSDHKIPPTTATTPPPPPQKPRPPSTPSSLGIRS) is disordered. Residues 50–63 (TPPPPPQKPRPPST) are compositionally biased toward pro residues.

Interacts with CDKA-1. Interacts with CYCD2-1, CYCD3-2 and CYCD4-1. Interacts with CDKB1-1. Interacts with CPR5. In terms of tissue distribution, expressed in the shoot apical meristem, leaf primordia and the elongation zone of the root.

It localises to the nucleus. Cyclin-dependent protein kinase (CDK) inhibitor that functions as a repressor of mitosis in the endoreduplication cell cycle. Inhibits the kinase activity of CYCD3-1/CDKA-1, CYCD2-1/CDKA-1 and CYCB1-1/CDKB1-1 complexes in a dose dependent manner. Cooperates with SMR1 and SMR2 to promote endoreplication during leaf development. Required for normal trichome endoreplicating cell cycles. Positive regulator of effector-triggered immunity (ETI). The chain is Cyclin-dependent protein kinase inhibitor SIM from Arabidopsis thaliana (Mouse-ear cress).